Consider the following 303-residue polypeptide: Ribosomal RNA small subunit methyltransferase H (303 aa).

S-adenosyl-L-methionine is bound by residues 36 to 38, aspartate 55, phenylalanine 81, aspartate 101, and glutamine 108; that span reads CGH.

The protein belongs to the methyltransferase superfamily. RsmH family.

Its subcellular location is the cytoplasm. The enzyme catalyses cytidine(1402) in 16S rRNA + S-adenosyl-L-methionine = N(4)-methylcytidine(1402) in 16S rRNA + S-adenosyl-L-homocysteine + H(+). Specifically methylates the N4 position of cytidine in position 1402 (C1402) of 16S rRNA. The chain is Ribosomal RNA small subunit methyltransferase H from Aster yellows witches'-broom phytoplasma (strain AYWB).